The following is a 148-amino-acid chain: Macrodomain Ter protein (148 aa).

The protein belongs to the MatP family. Homodimer.

The protein localises to the cytoplasm. Required for spatial organization of the terminus region of the chromosome (Ter macrodomain) during the cell cycle. Prevents early segregation of duplicated Ter macrodomains during cell division. Binds specifically to matS, which is a 13 bp signature motif repeated within the Ter macrodomain. The protein is Macrodomain Ter protein of Haemophilus ducreyi (strain 35000HP / ATCC 700724).